The sequence spans 384 residues: Dual-specificity RNA methyltransferase RlmN (384 aa).

The Proton acceptor role is filled by E93. The Radical SAM core domain occupies 99–339 (EETRGTLCVS…TTIRKTRGDD (241 aa)). A disulfide bond links C106 and C344. Positions 113, 117, and 120 each coordinate [4Fe-4S] cluster. S-adenosyl-L-methionine contacts are provided by residues 170 to 171 (GE), S202, 224 to 226 (SLH), and N301. C344 functions as the S-methylcysteine intermediate in the catalytic mechanism.

Belongs to the radical SAM superfamily. RlmN family. It depends on [4Fe-4S] cluster as a cofactor.

Its subcellular location is the cytoplasm. It catalyses the reaction adenosine(2503) in 23S rRNA + 2 reduced [2Fe-2S]-[ferredoxin] + 2 S-adenosyl-L-methionine = 2-methyladenosine(2503) in 23S rRNA + 5'-deoxyadenosine + L-methionine + 2 oxidized [2Fe-2S]-[ferredoxin] + S-adenosyl-L-homocysteine. The enzyme catalyses adenosine(37) in tRNA + 2 reduced [2Fe-2S]-[ferredoxin] + 2 S-adenosyl-L-methionine = 2-methyladenosine(37) in tRNA + 5'-deoxyadenosine + L-methionine + 2 oxidized [2Fe-2S]-[ferredoxin] + S-adenosyl-L-homocysteine. Specifically methylates position 2 of adenine 2503 in 23S rRNA and position 2 of adenine 37 in tRNAs. m2A2503 modification seems to play a crucial role in the proofreading step occurring at the peptidyl transferase center and thus would serve to optimize ribosomal fidelity. This is Dual-specificity RNA methyltransferase RlmN from Cupriavidus pinatubonensis (strain JMP 134 / LMG 1197) (Cupriavidus necator (strain JMP 134)).